The sequence spans 129 residues: Large ribosomal subunit protein uL22 (129 aa).

The protein belongs to the universal ribosomal protein uL22 family. In terms of assembly, part of the 50S ribosomal subunit.

In terms of biological role, this protein binds specifically to 23S rRNA; its binding is stimulated by other ribosomal proteins, e.g. L4, L17, and L20. It is important during the early stages of 50S assembly. It makes multiple contacts with different domains of the 23S rRNA in the assembled 50S subunit and ribosome. Functionally, the globular domain of the protein is located near the polypeptide exit tunnel on the outside of the subunit, while an extended beta-hairpin is found that lines the wall of the exit tunnel in the center of the 70S ribosome. The polypeptide is Large ribosomal subunit protein uL22 (Aster yellows witches'-broom phytoplasma (strain AYWB)).